Here is a 327-residue protein sequence, read N- to C-terminus: Tetraacyldisaccharide 4'-kinase (327 aa).

ATP is bound at residue 54-61 (TTGGTGKT). Positions 78–106 (PHILSRGHGGRERGPIGVNPNRSTPRDVG) are disordered.

It belongs to the LpxK family.

The enzyme catalyses a lipid A disaccharide + ATP = a lipid IVA + ADP + H(+). The protein operates within glycolipid biosynthesis; lipid IV(A) biosynthesis; lipid IV(A) from (3R)-3-hydroxytetradecanoyl-[acyl-carrier-protein] and UDP-N-acetyl-alpha-D-glucosamine: step 6/6. In terms of biological role, transfers the gamma-phosphate of ATP to the 4'-position of a tetraacyldisaccharide 1-phosphate intermediate (termed DS-1-P) to form tetraacyldisaccharide 1,4'-bis-phosphate (lipid IVA). The sequence is that of Tetraacyldisaccharide 4'-kinase from Gluconobacter oxydans (strain 621H) (Gluconobacter suboxydans).